The primary structure comprises 288 residues: 3-methyl-2-oxobutanoate hydroxymethyltransferase (288 aa).

Residues aspartate 48 and aspartate 87 each coordinate Mg(2+). Residues aspartate 48–serine 49, aspartate 87, and lysine 116 contribute to the 3-methyl-2-oxobutanoate site. Glutamate 118 contributes to the Mg(2+) binding site. Residue glutamate 185 is the Proton acceptor of the active site.

The protein belongs to the PanB family. Homodecamer; pentamer of dimers. It depends on Mg(2+) as a cofactor.

The protein localises to the cytoplasm. The enzyme catalyses 3-methyl-2-oxobutanoate + (6R)-5,10-methylene-5,6,7,8-tetrahydrofolate + H2O = 2-dehydropantoate + (6S)-5,6,7,8-tetrahydrofolate. It participates in cofactor biosynthesis; coenzyme A biosynthesis. In terms of biological role, catalyzes the reversible reaction in which hydroxymethyl group from 5,10-methylenetetrahydrofolate is transferred onto alpha-ketoisovalerate to form ketopantoate. The chain is 3-methyl-2-oxobutanoate hydroxymethyltransferase from Hyperthermus butylicus (strain DSM 5456 / JCM 9403 / PLM1-5).